Reading from the N-terminus, the 369-residue chain is Putative FAD-dependent oxidoreductase LodB (369 aa).

FAD is bound by residues 10–14 (GGGPA) and R103.

It depends on FAD as a cofactor.

The protein resides in the cytoplasm. Functionally, is required for lysine-epsilon oxidase (LOD) activity in M.mediterranea. May be involved in the generation of the quinonic cofactor of LodA, leading to the active form of LodA containing a tyrosine-derived quinone cofactor. This is Putative FAD-dependent oxidoreductase LodB (lodB) from Marinomonas mediterranea (strain ATCC 700492 / JCM 21426 / NBRC 103028 / MMB-1).